The following is a 274-amino-acid chain: Large ribosomal subunit protein uL2 (274 aa).

Residues 223 to 274 are disordered; that stretch reads VAMNPVDHPHGGGEGKTSGGRHPVSPWGVPTKGYKTRSNKRTDKFIVRRRAK.

It belongs to the universal ribosomal protein uL2 family. In terms of assembly, part of the 50S ribosomal subunit. Forms a bridge to the 30S subunit in the 70S ribosome.

In terms of biological role, one of the primary rRNA binding proteins. Required for association of the 30S and 50S subunits to form the 70S ribosome, for tRNA binding and peptide bond formation. It has been suggested to have peptidyltransferase activity; this is somewhat controversial. Makes several contacts with the 16S rRNA in the 70S ribosome. This Colwellia psychrerythraea (strain 34H / ATCC BAA-681) (Vibrio psychroerythus) protein is Large ribosomal subunit protein uL2.